Here is a 169-residue protein sequence, read N- to C-terminus: S-ribosylhomocysteine lyase (169 aa).

Residues His54, His58, and Cys128 each coordinate Fe cation.

The protein belongs to the LuxS family. As to quaternary structure, homodimer. Fe cation serves as cofactor.

The catalysed reaction is S-(5-deoxy-D-ribos-5-yl)-L-homocysteine = (S)-4,5-dihydroxypentane-2,3-dione + L-homocysteine. Its function is as follows. Involved in the synthesis of autoinducer 2 (AI-2) which is secreted by bacteria and is used to communicate both the cell density and the metabolic potential of the environment. The regulation of gene expression in response to changes in cell density is called quorum sensing. Catalyzes the transformation of S-ribosylhomocysteine (RHC) to homocysteine (HC) and 4,5-dihydroxy-2,3-pentadione (DPD). This Shewanella putrefaciens (strain CN-32 / ATCC BAA-453) protein is S-ribosylhomocysteine lyase.